The chain runs to 39 residues: Photosystem II reaction center protein I (39 aa).

A helical membrane pass occupies residues I6–S26.

It belongs to the PsbI family. As to quaternary structure, PSII is composed of 1 copy each of membrane proteins PsbA, PsbB, PsbC, PsbD, PsbE, PsbF, PsbH, PsbI, PsbJ, PsbK, PsbL, PsbM, PsbT, PsbX, PsbY, PsbZ, Psb30/Ycf12, peripheral proteins PsbO, CyanoQ (PsbQ), PsbU, PsbV and a large number of cofactors. It forms dimeric complexes.

The protein localises to the cellular thylakoid membrane. One of the components of the core complex of photosystem II (PSII), required for its stability and/or assembly. PSII is a light-driven water:plastoquinone oxidoreductase that uses light energy to abstract electrons from H(2)O, generating O(2) and a proton gradient subsequently used for ATP formation. It consists of a core antenna complex that captures photons, and an electron transfer chain that converts photonic excitation into a charge separation. This Synechococcus sp. (strain RCC307) protein is Photosystem II reaction center protein I.